Here is a 372-residue protein sequence, read N- to C-terminus: Methylthioribose-1-phosphate isomerase (372 aa).

The Proton donor role is filled by D252.

Belongs to the eIF-2B alpha/beta/delta subunits family. MtnA subfamily.

It is found in the cytoplasm. Its subcellular location is the nucleus. The enzyme catalyses 5-(methylsulfanyl)-alpha-D-ribose 1-phosphate = 5-(methylsulfanyl)-D-ribulose 1-phosphate. The protein operates within amino-acid biosynthesis; L-methionine biosynthesis via salvage pathway; L-methionine from S-methyl-5-thio-alpha-D-ribose 1-phosphate: step 1/6. Functionally, catalyzes the interconversion of methylthioribose-1-phosphate (MTR-1-P) into methylthioribulose-1-phosphate (MTRu-1-P). In Yarrowia lipolytica (strain CLIB 122 / E 150) (Yeast), this protein is Methylthioribose-1-phosphate isomerase.